A 906-amino-acid polypeptide reads, in one-letter code: DNA mismatch repair protein MutS (906 aa).

Position 656–663 (656–663 (GPNMAGKS)) interacts with ATP.

It belongs to the DNA mismatch repair MutS family.

Its function is as follows. This protein is involved in the repair of mismatches in DNA. It is possible that it carries out the mismatch recognition step. This protein has a weak ATPase activity. The chain is DNA mismatch repair protein MutS from Rhodopseudomonas palustris (strain BisA53).